Here is a 324-residue protein sequence, read N- to C-terminus: Putative ribose-phosphate pyrophosphokinase 2 (324 aa).

ATP is bound by residues 43 to 45 (DGE) and 102 to 103 (RQ). His-136 is a Mg(2+) binding site. D-ribose 5-phosphate is bound by residues Asp-225 and 229–233 (NTGKT).

It belongs to the ribose-phosphate pyrophosphokinase family. Class I subfamily. As to quaternary structure, homohexamer. Mg(2+) is required as a cofactor.

The protein resides in the cytoplasm. The catalysed reaction is D-ribose 5-phosphate + ATP = 5-phospho-alpha-D-ribose 1-diphosphate + AMP + H(+). The protein operates within metabolic intermediate biosynthesis; 5-phospho-alpha-D-ribose 1-diphosphate biosynthesis; 5-phospho-alpha-D-ribose 1-diphosphate from D-ribose 5-phosphate (route I): step 1/1. Its function is as follows. Involved in the biosynthesis of the central metabolite phospho-alpha-D-ribosyl-1-pyrophosphate (PRPP) via the transfer of pyrophosphoryl group from ATP to 1-hydroxyl of ribose-5-phosphate (Rib-5-P). The polypeptide is Putative ribose-phosphate pyrophosphokinase 2 (Streptococcus agalactiae serotype III (strain NEM316)).